The following is a 293-amino-acid chain: MRFSVFLPAIAALSSAVAAQRSCGSIPHKAFSNELKEAMENSRTSSFSNVTSNVTINTYFHVITDGNTGKISDETLQKQIAVLNSDYKASGFSFKLVASDSVDNPTWAAGEDDMGMKSALRKGGYDTLNVYFVPMLREGLLGFCYFPMKNPSEGQKIKDGCVINSNSVPGGSAQNYNEGKTTTHEVGHFMGLYHVFNEQEGNCQQDGDMIEDTPVQGSASSGCPTGKDSCPQQGVDSIHNYMDYSYDSCLTEFSPGQIKRMQMLWQFRAGSGSGSVTRPRPKPPVLMDYEHRL.

The first 19 residues, Met1–Ala19, serve as a signal peptide directing secretion. Asn49 and Asn53 each carry an N-linked (GlcNAc...) asparagine glycan. His184 contacts Zn(2+). Glu185 is an active-site residue. His188 contributes to the Zn(2+) binding site. A disulfide bridge links Cys223 with Cys249. The segment at Gly270–Leu293 is disordered.

This sequence belongs to the peptidase M43B family.

The protein localises to the secreted. Its function is as follows. Secreted metalloproteinase that allows assimilation of proteinaceous substrates. Plays a pivotal role as a pathogenicity determinant during infections and contributes to the ability of the pathogen to persist within the mammalian host. The sequence is that of Extracellular metalloprotease MGYG_00389 from Arthroderma gypseum (strain ATCC MYA-4604 / CBS 118893) (Microsporum gypseum).